Here is a 188-residue protein sequence, read N- to C-terminus: MKFIFGLGNIGAEYDQTRHNIGFMAVDAFATANHMSFSPSKQFALVAKTIIGGESVMLVKPTTYMNDSGKAVRAILDYYDGDVDDVLVLVDDMDLPFGKMRFRAKGSAGGHNGLKSIMTHTGSQTFLRLKFGLGHPVHEQNVVVNYVLGKFTAAEKPDIDAMLDRSTQAIADWIQGATAPELSNRYNG.

Residue Tyr14 coordinates tRNA. Catalysis depends on His19, which acts as the Proton acceptor. Positions 64, 66, and 112 each coordinate tRNA.

It belongs to the PTH family. In terms of assembly, monomer.

It localises to the cytoplasm. It catalyses the reaction an N-acyl-L-alpha-aminoacyl-tRNA + H2O = an N-acyl-L-amino acid + a tRNA + H(+). Functionally, hydrolyzes ribosome-free peptidyl-tRNAs (with 1 or more amino acids incorporated), which drop off the ribosome during protein synthesis, or as a result of ribosome stalling. Catalyzes the release of premature peptidyl moieties from peptidyl-tRNA molecules trapped in stalled 50S ribosomal subunits, and thus maintains levels of free tRNAs and 50S ribosomes. This chain is Peptidyl-tRNA hydrolase, found in Leuconostoc mesenteroides subsp. mesenteroides (strain ATCC 8293 / DSM 20343 / BCRC 11652 / CCM 1803 / JCM 6124 / NCDO 523 / NBRC 100496 / NCIMB 8023 / NCTC 12954 / NRRL B-1118 / 37Y).